Reading from the N-terminus, the 106-residue chain is Small ribosomal subunit protein uS10 (106 aa).

Belongs to the universal ribosomal protein uS10 family. As to quaternary structure, part of the 30S ribosomal subunit.

Involved in the binding of tRNA to the ribosomes. This Synechococcus sp. (strain CC9605) protein is Small ribosomal subunit protein uS10.